An 803-amino-acid chain; its full sequence is Protein AMEIOTIC 1 homolog (803 aa).

2 disordered regions span residues 21–64 (RPQV…QSLS) and 264–333 (RLRQ…RWSA). Residues 39 to 50 (NGKDDANHDESK) show a composition bias toward basic and acidic residues. The segment covering 51 to 64 (NQSPGLPLSRQSLS) has biased composition (polar residues). The span at 283-295 (KREEAESSMDKSR) shows a compositional bias: basic and acidic residues. A compositionally biased stretch (basic residues) spans 296–313 (AARKKKAKTYKSPKKVEK). The segment covering 314-333 (RRVVEAKDGDPRRGKDRWSA) has biased composition (basic and acidic residues). The stretch at 450 to 567 (VKKKVEELAE…SSFLSLKEQL (118 aa)) forms a coiled coil. The segment at 651–688 (ISGGGSSSCPVASGPEQLPRSSSCPSIGPGGLPPSSRA) is disordered.

The protein resides in the nucleus. Its subcellular location is the chromosome. In terms of biological role, plays a fundamental role in building the proper chromosome structure at the beginning of meiosis in male meiocytes. Required for the transition from leptotene to zygotene in meiocytes. Required for homologous chromosome pairing. This chain is Protein AMEIOTIC 1 homolog, found in Oryza sativa subsp. japonica (Rice).